Here is an 862-residue protein sequence, read N- to C-terminus: Cone cGMP-specific 3',5'-cyclic phosphodiesterase subunit alpha' (862 aa).

2 consecutive GAF domains span residues 75-224 (SMEK…SLVL) and 256-433 (DIER…GWSV). Residues Ser-97, Asn-116, 169 to 172 (DKKT), and Thr-176 contribute to the 3',5'-cyclic GMP site. Residues 486–819 (DEKDLIRILK…VEWKTRADEY (334 aa)) enclose the PDEase domain. Catalysis depends on His-562, which acts as the Proton donor. Residues His-566, His-602, Asp-603, and Asp-723 each coordinate a divalent metal cation. Residues 830 to 842 (KKKEEEAAAKKAE) show a composition bias toward basic and acidic residues. Positions 830-862 (KKKEEEAAAKKAENAAGGGGGGEDGKSKTCIVL) are disordered. The residue at position 859 (Cys-859) is a Cysteine methyl ester. Residue Cys-859 is the site of S-geranylgeranyl cysteine attachment. Positions 860–862 (IVL) are cleaved as a propeptide — removed in mature form.

It belongs to the cyclic nucleotide phosphodiesterase family. As to quaternary structure, composed of two alpha' subunits that are associated with 3 smaller proteins of 11, 13, and 15 kDa. A divalent metal cation is required as a cofactor.

The protein localises to the cell membrane. The catalysed reaction is 3',5'-cyclic GMP + H2O = GMP + H(+). In terms of biological role, as cone-specific cGMP phosphodiesterase, it plays an essential role in light detection and cone phototransduction by rapidly decreasing intracellular levels of cGMP. In Gallus gallus (Chicken), this protein is Cone cGMP-specific 3',5'-cyclic phosphodiesterase subunit alpha' (PDE6C).